The sequence spans 114 residues: Large ribosomal subunit protein bL19 (114 aa).

Belongs to the bacterial ribosomal protein bL19 family.

This protein is located at the 30S-50S ribosomal subunit interface and may play a role in the structure and function of the aminoacyl-tRNA binding site. This Desulfatibacillum aliphaticivorans protein is Large ribosomal subunit protein bL19.